A 65-amino-acid polypeptide reads, in one-letter code: MKTSKMICAFLLVLVVGTFNDISGAYGEYVEDQHSFKIERRFPPCVEVCVQHTGNVKECEAACGE.

Residues 1-27 (MKTSKMICAFLLVLVVGTFNDISGAYG) form the signal peptide. Positions 28-39 (EYVEDQHSFKIE) are excised as a propeptide. 2 disulfides stabilise this stretch: cysteine 45/cysteine 63 and cysteine 49/cysteine 59.

Belongs to the short scorpion toxin superfamily. Potassium channel inhibitor kappa-KTx family. Kappa-KTx 2 subfamily. In terms of tissue distribution, expressed by the venom gland.

The protein localises to the secreted. In terms of biological role, potassium channel inhibitor (Kv). The sequence is that of Potassium channel toxin kappa-KTx 2.6 from Opisthacanthus cayaporum (South American scorpion).